The chain runs to 349 residues: MGDMGDPPKKKRLISLCVGCGNQIHDQYILRVSPDLEWHAACLKCAECNQYLDESCTCFVRDGKTYCKRDYIRLYGIKCAKCNIGFSKNDFVMRARSKVYHIECFRCVACSRQLIPGDEFALREDGLFCRADHDVVERATMGAGDPLSPLHPARPLQMAAEPISARQPALRPHVHKQPEKTTRVRTVLNEKQLHTLRTCYNANPRPDALMKEQLVEMTGLSPRVIRVWFQNKRCKDKKRSILMKQLQQQQPNDKTNIQGMTGTPMVATSPERHDGGLQANQVEVQSYQPPWKVLSDFALQSDIDQPAFQQLVNFSEGGPGSNSTGSEVASMSSQLPDTPNSMVASPIEA.

LIM zinc-binding domains are found at residues 17–70 (CVGC…CKRD) and 79–133 (CAKC…RADH). Positions 181-240 (TTRVRTVLNEKQLHTLRTCYNANPRPDALMKEQLVEMTGLSPRVIRVWFQNKRCKDKKRS) form a DNA-binding region, homeobox. Positions 312–349 (VNFSEGGPGSNSTGSEVASMSSQLPDTPNSMVASPIEA) are disordered. The span at 321 to 343 (SNSTGSEVASMSSQLPDTPNSMV) shows a compositional bias: polar residues.

The protein localises to the nucleus. Functionally, DNA-binding transcriptional activator. Recognizes and binds to the consensus octamer binding site 5'-ATAATTAA-3' in promoter of target genes. Plays a fundamental role in the gene regulatory network essential for retinal ganglion cell (RGC) differentiation. May be involved in subtype specialization of primary motoneurons. May bind to insulin gene enhancer sequences. Essential for heart development. This is Insulin gene enhancer protein isl-1 (isl1) from Danio rerio (Zebrafish).